A 718-amino-acid chain; its full sequence is Cyclic-di-AMP phosphodiesterase PgpH (718 aa).

Over 1–17 (MKLAKKWRDWYIESGKK) the chain is Cytoplasmic. The chain crosses the membrane as a helical span at residues 18–38 (YLFPLLLVCFAVIAYFLVCQM). Residues 39 to 289 (TKPESYNVKL…MLHLLDQKMP (251 aa)) lie on the Extracellular side of the membrane. The segment covering 112–127 (QEKDTKNKEKAKKENK) has biased composition (basic and acidic residues). The interval 112-140 (QEKDTKNKEKAKKENKPAPAPTSTEDKLK) is disordered. The helical transmembrane segment at 290–310 (VKQYAGFAIFIIALAAILFLY) threads the bilayer. Topologically, residues 311-324 (TKKQTQPKAKKMQT) are cytoplasmic. A helical membrane pass occupies residues 325–345 (MLIFSSVYLVSLFMLFIILFL). The Extracellular segment spans residues 346-349 (ETQN). Helical transmembrane passes span 350–370 (IANI…KILL) and 371–391 (NEKY…LTFQ). A topological domain (extracellular) is located at residue Asn392. A helical membrane pass occupies residues 393-413 (DATSGITIFILLSGATSVVML). The Cytoplasmic segment spans residues 414-421 (RDYSRRSA). A helical transmembrane segment spans residues 422-442 (IMLSGFMVGLINMIYVLLLLL). Residues 443–457 (INNSTLLQVSTLMAL) lie on the Extracellular side of the membrane. The helical transmembrane segment at 458–478 (GYAFLGGFGAFILGVGVIPLF) threads the bilayer. Topologically, residues 479 to 718 (ETIFGLLTTS…QRIQYPDDKD (240 aa)) are cytoplasmic. Positions 511-653 (TYHHSMMVAN…INISDSVEAA (143 aa)) constitute an HD domain. 3 residues coordinate Mn(2+): His514, His543, and Asp544. Residue His514 participates in substrate binding. Substrate is bound by residues 544–547 (DIGK) and 555–556 (VE). His580, His604, and His605 together coordinate Mn(2+). Substrate-binding residues include Tyr631 and Asp648. Asp648 serves as a coordination point for Mn(2+).

The protein belongs to the PgpH phosphodiesterase family. The cofactor is Mn(2+).

Its subcellular location is the cell membrane. The enzyme catalyses 3',3'-c-di-AMP + H2O = 5'-O-phosphonoadenylyl-(3'-&gt;5')-adenosine + H(+). Its activity is regulated as follows. c-di-AMP hydrolysis inhibited by ppGpp, without altering c-di-AMP binding. A phosphodiesterase (PDE) that hydrolyzes cyclic di-3',5'-adenylate (c-di-AMP); there are at least 2 PDEs for c-di-AMP in this bacteria (this and pdeA), this may be the major PDE for growth in liquid culture. During host infection c-di-AMP is secreted into the host cytoplasm which leads to interferon-beta production and secretion by the host. The cytoplasmic HD domain binds and hydrolyzes c-di-AMP to 5'-pApA; has very low activity against c-di-GMP, does not hydrolyze ppGpp. The protein is Cyclic-di-AMP phosphodiesterase PgpH of Listeria monocytogenes serotype 1/2a (strain 10403S).